A 156-amino-acid polypeptide reads, in one-letter code: Small ribosomal subunit protein uS7 (156 aa).

The protein belongs to the universal ribosomal protein uS7 family. Part of the 30S ribosomal subunit. Contacts proteins S9 and S11.

One of the primary rRNA binding proteins, it binds directly to 16S rRNA where it nucleates assembly of the head domain of the 30S subunit. Is located at the subunit interface close to the decoding center, probably blocks exit of the E-site tRNA. The chain is Small ribosomal subunit protein uS7 from Clostridium kluyveri (strain NBRC 12016).